Consider the following 205-residue polypeptide: MPVVFVAASKLPTPFATFTMHGFLDEATGREHVVLSLGDIADGEPVLGRLHSECLTGDALFSQRCDCGSQLEAALQAIAREGRGVLLYLRQEGRGIGLLNKIRAYELQDGGADTVEANERLGFAADQRDYAICLPMLEHLGVKSLRLMTNNPRKVKALTDMNIKVAERVPLHTGHNPHNRYYLATKADKLGHMLGNEHQGEVPQA.

Arginine 49–glutamate 53 provides a ligand contact to GTP. Zn(2+)-binding residues include cysteine 54, cysteine 65, and cysteine 67. GTP is bound by residues glutamine 70, glutamate 92 to arginine 94, and threonine 114. Residue aspartate 126 is the Proton acceptor of the active site. The active-site Nucleophile is arginine 128. Threonine 149 and lysine 154 together coordinate GTP.

The protein belongs to the GTP cyclohydrolase II family. Zn(2+) serves as cofactor.

The enzyme catalyses GTP + 4 H2O = 2,5-diamino-6-hydroxy-4-(5-phosphoribosylamino)-pyrimidine + formate + 2 phosphate + 3 H(+). Its pathway is cofactor biosynthesis; riboflavin biosynthesis; 5-amino-6-(D-ribitylamino)uracil from GTP: step 1/4. In terms of biological role, catalyzes the conversion of GTP to 2,5-diamino-6-ribosylamino-4(3H)-pyrimidinone 5'-phosphate (DARP), formate and pyrophosphate. The polypeptide is GTP cyclohydrolase-2 (Pseudomonas putida (strain W619)).